Here is an 84-residue protein sequence, read N- to C-terminus: Small ribosomal subunit protein uS15 (84 aa).

Belongs to the universal ribosomal protein uS15 family. In terms of assembly, part of the 30S ribosomal subunit. Forms a bridge to the 50S subunit in the 70S ribosome, contacting the 23S rRNA.

Its function is as follows. One of the primary rRNA binding proteins, it binds directly to 16S rRNA where it helps nucleate assembly of the platform of the 30S subunit by binding and bridging several RNA helices of the 16S rRNA. Functionally, forms an intersubunit bridge (bridge B4) with the 23S rRNA of the 50S subunit in the ribosome. This chain is Small ribosomal subunit protein uS15, found in Fervidobacterium nodosum (strain ATCC 35602 / DSM 5306 / Rt17-B1).